A 33-amino-acid chain; its full sequence is Trypsin inhibitor 1 (33 aa).

3 disulfide bridges follow: Cys-1-Cys-17, Cys-8-Cys-21, and Cys-16-Cys-32.

Expressed in leaves and fruit flesh (at protein level).

Functionally, inhibits trypsin (IC(50)=471 nM). In Beta vulgaris subsp. vulgaris (Beet), this protein is Trypsin inhibitor 1.